A 349-amino-acid chain; its full sequence is Dihydroorotate dehydrogenase (quinone) (349 aa).

FMN contacts are provided by residues 65-69 (AGFDK) and Ala-89. Lys-69 contributes to the substrate binding site. 114–118 (NRMGF) contributes to the substrate binding site. FMN-binding residues include Asn-143 and Asn-176. Residue Asn-176 participates in substrate binding. Residue Ser-179 is the Nucleophile of the active site. Asn-181 contributes to the substrate binding site. Residues Lys-212 and Thr-240 each contribute to the FMN site. 241-242 (NT) lines the substrate pocket. A disordered region spans residues 244-265 (TERPESLSHPHAGEQGGLSGAP). Residues 245-255 (ERPESLSHPHA) are compositionally biased toward basic and acidic residues. FMN contacts are provided by residues Gly-263, Gly-290, and 311–312 (YT).

The protein belongs to the dihydroorotate dehydrogenase family. Type 2 subfamily. As to quaternary structure, monomer. FMN is required as a cofactor.

The protein resides in the cell membrane. The catalysed reaction is (S)-dihydroorotate + a quinone = orotate + a quinol. It participates in pyrimidine metabolism; UMP biosynthesis via de novo pathway; orotate from (S)-dihydroorotate (quinone route): step 1/1. Catalyzes the conversion of dihydroorotate to orotate with quinone as electron acceptor. The sequence is that of Dihydroorotate dehydrogenase (quinone) from Halobacterium salinarum (strain ATCC 29341 / DSM 671 / R1).